The primary structure comprises 485 residues: Caspid protein (485 aa).

N-linked (GlcNAc...) asparagine; by host glycans are attached at residues N5 and N178. Residues 236–262 form a particle formation region; that stretch reads IALTLFNLADTLLGGLPTELISSAGGQ. N430 carries N-linked (GlcNAc...) asparagine; by host glycosylation. The segment at 453-478 is oligomerization; sequence TTSLGAGPVSISAVAVLAPHSALALL.

It belongs to the hepevirus capsid protein family. Self-assembles to form the capsid. The capsid is dominated by dimers that define the 30 morphological units. Interacts with phosphorylated protein ORF3. Interacts with host TMEM134. Interacts with host ASGR1 and ASGR2; these interactions facilitate infection of host hepatocytes. Post-translationally, not N-glycosylated.

It is found in the virion. It localises to the host cytoplasm. The protein localises to the host endoplasmic reticulum. The protein resides in the host Golgi apparatus. Its subcellular location is the host cell surface. It is found in the host nucleus. In terms of biological role, forms an icosahedral capsid with a T=1 symmetry and a 34 nm diameter. The capsid is composed of 60 copies linked to each other. Binds to the 5' end of the genomic RNA to mediate genome encapsidation. Binds to heparin surface proteoglycans (HSPGs) to mediate viral entry. Additionally, the interactions with host ASGR1 and ASGR2 facilitate viral infection of hepatocytes. Inhibits IFN production by blocking host TBK1-induced IRF3 phosphorylation. The nuclear form probably modulates host gene expression. The sequence is that of Caspid protein from Hepatitis E virus (isolate Rhesus/HT-4) (HEV).